The following is a 465-amino-acid chain: ATP synthase subunit beta (465 aa).

Position 148-155 (148-155 (GGAGVGKT)) interacts with ATP.

It belongs to the ATPase alpha/beta chains family. F-type ATPases have 2 components, CF(1) - the catalytic core - and CF(0) - the membrane proton channel. CF(1) has five subunits: alpha(3), beta(3), gamma(1), delta(1), epsilon(1). CF(0) has three main subunits: a(1), b(2) and c(9-12). The alpha and beta chains form an alternating ring which encloses part of the gamma chain. CF(1) is attached to CF(0) by a central stalk formed by the gamma and epsilon chains, while a peripheral stalk is formed by the delta and b chains.

It localises to the cell inner membrane. It carries out the reaction ATP + H2O + 4 H(+)(in) = ADP + phosphate + 5 H(+)(out). Functionally, produces ATP from ADP in the presence of a proton gradient across the membrane. The catalytic sites are hosted primarily by the beta subunits. The sequence is that of ATP synthase subunit beta from Neisseria meningitidis serogroup B (strain ATCC BAA-335 / MC58).